Reading from the N-terminus, the 335-residue chain is Pregnancy-specific beta-1-glycoprotein 5 (335 aa).

The N-terminal stretch at 1–34 (MGPLSAPPCTQHITWKGLLLTASLLNFWNLPITA) is a signal peptide. In terms of domain architecture, Ig-like V-type spans 35–144 (QVTIEALPPK…TGYFTFNLYL (110 aa)). 2 N-linked (GlcNAc...) asparagine glycosylation sites follow: Asn104 and Asn111. A Cell attachment site motif is present at residues 127–129 (RGD). Ig-like C2-type domains are found at residues 147-234 (PKPY…VTLN) and 239-317 (PDLP…KSMT). Intrachain disulfides connect Cys169/Cys217 and Cys261/Cys301. Asn175 and Asn210 each carry an N-linked (GlcNAc...) asparagine glycan.

Belongs to the immunoglobulin superfamily. CEA family. As to expression, synthesized by syncytiotrophoblast of the placenta.

It localises to the secreted. This Homo sapiens (Human) protein is Pregnancy-specific beta-1-glycoprotein 5 (PSG5).